The sequence spans 472 residues: Carbohydrate sulfotransferase 3 (472 aa).

Residues 1–19 (MEKGLALPQDFRDLVHSLK) are Cytoplasmic-facing. Residues 20-38 (IRGRYVLFLAFVVIVFIFI) form a helical; Signal-anchor for type II membrane protein membrane-spanning segment. Residues 39-472 (EKENKIISRV…LEERGTFWVT (434 aa)) lie on the Lumenal side of the membrane. N-linked (GlcNAc...) asparagine glycosylation is found at Asn-63, Asn-74, and Asn-96. Residue 135-141 (TRTGSSF) coordinates 3'-phosphoadenylyl sulfate. Residue Asn-250 is glycosylated (N-linked (GlcNAc...) asparagine). 295–303 (RDPRAVLAS) provides a ligand contact to 3'-phosphoadenylyl sulfate. Asn-413 and Asn-457 each carry an N-linked (GlcNAc...) asparagine glycan.

Belongs to the sulfotransferase 1 family. Gal/GlcNAc/GalNAc subfamily. N-glycosylated. As to expression, widely expressed. Highly expressed in spleen, lung, eye and stomach. Constitutively expressed at low level during the mid- to late-gestation period. Expressed in the brain in a temporally controlled manner: peaks at 2 weeks after birth in the cerebellum, but at 3 weeks in the cerebrum. Localizes to stromal cells in the bone marrow, and stromal cells in the marginal zone and red pulp of the spleen, but the sense probe did not.

Its subcellular location is the golgi apparatus membrane. It carries out the reaction chondroitin beta-D-glucuronate + n 3'-phosphoadenylyl sulfate = chondroitin 6'-sulfate + n adenosine 3',5'-bisphosphate + n H(+). The enzyme catalyses 3'-phosphoadenylyl sulfate + keratan = adenosine 3',5'-bisphosphate + keratan 6'-sulfate.. In terms of biological role, sulfotransferase that utilizes 3'-phospho-5'-adenylyl sulfate (PAPS) as sulfonate donor to catalyze the transfer of sulfate to position 6 of the N-acetylgalactosamine (GalNAc) residue of chondroitin. Chondroitin sulfate constitutes the predominant proteoglycan present in cartilage and is distributed on the surfaces of many cells and extracellular matrices. Catalyzes with a lower efficiency the sulfation of Gal residues of keratan sulfate, another glycosaminoglycan. Can also catalyze the sulfation of the Gal residues in sialyl N-acetyllactosamine (sialyl LacNAc) oligosaccharides. May play a role in the maintenance of naive T-lymphocytes in the spleen. This chain is Carbohydrate sulfotransferase 3 (Chst3), found in Mus musculus (Mouse).